A 711-amino-acid polypeptide reads, in one-letter code: Angiogenic factor with G patch and FHA domains 1 (711 aa).

Over residues 1 to 19 (MASEAPSPPSPSPPPPASP) the composition is skewed to pro residues. Disordered regions lie at residues 1–23 (MASE…EPEL), 137–184 (ALDP…EGPA), 260–297 (PYQT…SEDQ), and 311–400 (EHSG…EDEE). At alanine 2 the chain carries N-acetylalanine. Phosphoserine is present on residues serine 7 and serine 12. The stretch at 19–85 (PEPELAQLRR…SKILHCGKNE (67 aa)) forms a coiled coil. Residues 167-176 (AVTSDSQESV) are compositionally biased toward polar residues. A compositionally biased stretch (basic residues) spans 270-279 (RERRLKKRRK). Residues 287–297 (NEEKDLSSEDQ) show a composition bias toward basic and acidic residues. The residue at position 344 (serine 344) is a Phosphoserine. A compositionally biased stretch (acidic residues) spans 361–370 (SESEPEEGEI). Positions 374–391 (QSEKSYDGDSSSGDRETS) are enriched in basic and acidic residues. The FHA domain occupies 431-484 (ATIGREKDMEHTVRIPEVAVSKFHAEVYFDHDLQSYVLVDQGSQNGTIVNGKQI). Basic and acidic residues-rich tracts occupy residues 579–606 (LKNP…RDDA) and 613–623 (EITDSNKGRKM). The disordered stretch occupies residues 579 to 623 (LKNPKYKDRAGKRREQVGSEGTFQRDDAPASVHSEITDSNKGRKM). Positions 616–662 (DSNKGRKMLEKMGWKRGEGLGKDGGGMKTPIQLQLRRTHAGLGTGKL) constitute a G-patch domain. Lysine 661 carries the N6-acetyllysine modification. Basic and acidic residues predominate over residues 690 to 699 (FTENKPRKET). The tract at residues 690-711 (FTENKPRKETPGAVPWVTGTAE) is disordered.

As to quaternary structure, interacts with the secreted angiogenic factor TNFSF12.

The protein resides in the cytoplasm. It localises to the secreted. In terms of biological role, promotes angiogenesis and the proliferation of endothelial cells. Able to bind to endothelial cells and promote cell proliferation, suggesting that it may act in an autocrine fashion. This chain is Angiogenic factor with G patch and FHA domains 1 (Aggf1), found in Mus musculus (Mouse).